Reading from the N-terminus, the 1123-residue chain is uncharacterized protein (1123 aa).

Disordered regions lie at residues 136 to 229 (LGES…PKLT), 262 to 471 (MLQY…LNQH), 483 to 514 (LSSI…SPNL), 527 to 609 (KKIN…QSDD), 629 to 769 (SILC…NNIS), 782 to 812 (LKPK…NSSS), 835 to 1005 (ITNN…GESN), and 1070 to 1099 (NNNN…NNNI). The segment covering 166–185 (GGNGGNSGTNGDGDDGGCSL) has biased composition (gly residues). Positions 190–199 (DENDYEDGMV) are enriched in acidic residues. Gly residues predominate over residues 211–223 (SGDGGGGGGGGGD). Low complexity predominate over residues 262-322 (MLQYQQQQQQ…TTTTHSNNSN (61 aa)). A compositionally biased stretch (polar residues) spans 329 to 343 (PLNNSNSNIHFLTNQ). 5 stretches are compositionally biased toward low complexity: residues 344–387 (QNSD…SNLN), 397–464 (STST…SSSS), 489–499 (NNKENNNNNNN), 527–548 (KKIN…NISS), and 563–585 (HQQQ…QQHQ). The segment covering 590–604 (SKSSSELQVPSSNYH) has biased composition (polar residues). Over residues 632 to 646 (CKDDSKTNTNKDKDN) the composition is skewed to basic and acidic residues. 2 stretches are compositionally biased toward low complexity: residues 647 to 707 (NNSN…INNN) and 727 to 769 (SVSS…NNIS). Positions 790 to 799 (SSPSIPTTSP) are enriched in polar residues. 2 stretches are compositionally biased toward low complexity: residues 835–984 (ITNN…NNNI) and 1070–1098 (NNNN…NNNN).

This is an uncharacterized protein from Dictyostelium discoideum (Social amoeba).